The primary structure comprises 1775 residues: Protein TIC 214 (1775 aa).

The next 6 helical transmembrane spans lie at 19–39, 68–88, 91–111, 133–153, 176–196, and 227–247; these read IINS…FSIG, FIAG…HLAL, PHTI…WNNH, VFLN…SSML, VGWL…LVWI, and IFSI…PSPI. Residues 1491–1512 are disordered; it reads KESAGQGERESDNEKKKNLESA.

This sequence belongs to the TIC214 family. As to quaternary structure, part of the Tic complex.

Its subcellular location is the plastid. It is found in the chloroplast inner membrane. Its function is as follows. Involved in protein precursor import into chloroplasts. May be part of an intermediate translocation complex acting as a protein-conducting channel at the inner envelope. In Lobularia maritima (Sweet alyssum), this protein is Protein TIC 214.